Reading from the N-terminus, the 542-residue chain is uncharacterized protein (542 aa).

The next 12 membrane-spanning stretches (helical) occupy residues 12-32 (LVFGLVVIVALVAAVVVGTVL), 57-77 (FGDVQIDGEVVLLLFLPAILY), 94-114 (VIVMFSIGLVIATAVAVSWTA), 123-143 (AAAVLGAVLSPTDAAAVAGLA), 168-188 (LFAVTVAVAEGAAGIGPAALV), 191-211 (FVVSYLGGIMAGLLVGGLVTL), 216-236 (IDAPLEEGALSLLTPFAAFLL), 243-263 (SGVVAVLVSALVLTYVGPTVI), 277-297 (IATFLINGSLWVFVGVQIPGA), 313-333 (VLALAVTGVVIATRIAWVQAT), 358-378 (VTSWAGFRGAVSLAAALAVPM), and 391-411 (LIIFVVSVVILVTVLVQGTSL).

This sequence belongs to the monovalent cation:proton antiporter 1 (CPA1) transporter (TC 2.A.36) family.

It is found in the cell membrane. This is an uncharacterized protein from Mycobacterium bovis (strain ATCC BAA-935 / AF2122/97).